The chain runs to 251 residues: Triosephosphate isomerase (251 aa).

Position 9-11 (9-11 (NWK)) interacts with substrate. The active-site Electrophile is the histidine 95. Residue glutamate 167 is the Proton acceptor of the active site. Substrate-binding positions include glycine 173, serine 213, and 234–235 (GG).

The protein belongs to the triosephosphate isomerase family. Homodimer.

The protein resides in the cytoplasm. It catalyses the reaction D-glyceraldehyde 3-phosphate = dihydroxyacetone phosphate. It functions in the pathway carbohydrate biosynthesis; gluconeogenesis. The protein operates within carbohydrate degradation; glycolysis; D-glyceraldehyde 3-phosphate from glycerone phosphate: step 1/1. Functionally, involved in the gluconeogenesis. Catalyzes stereospecifically the conversion of dihydroxyacetone phosphate (DHAP) to D-glyceraldehyde-3-phosphate (G3P). The chain is Triosephosphate isomerase from Pelobacter propionicus (strain DSM 2379 / NBRC 103807 / OttBd1).